The chain runs to 298 residues: Rhodomycin D methylesterase DauP (298 aa).

An AB hydrolase-1 domain is found at 25–277; sequence PLLLIAGGNL…VEIENMGHAL (253 aa).

Belongs to the methyl esterase DnrP family.

It carries out the reaction rhodomycin D + H2O = 10-carboxy-13-deoxycarminomycin + methanol + H(+). The enzyme catalyses 4-O-methylrhodomycin D + H2O = 10-carboxy-13-deoxydaunorubicin + methanol + H(+). It functions in the pathway antibiotic biosynthesis; daunorubicin biosynthesis. Its pathway is antibiotic biosynthesis; carminomycin biosynthesis. Involved in the biosynthesis of the anthracyclines carminomycin and daunorubicin (daunomycin) which are aromatic polyketide antibiotics that exhibit high cytotoxicity and are widely applied in the chemotherapy of a variety of cancers. Catalyzes the removal of methyl group from the carbomethoxy group of rhodomycin D (10-carbomethoxy-13-deoxycarminomycin) and 4-O-methylrhodomycin D to yield 10-carboxy-13-deoxycarminomycin and 10-carboxy-13-deoxydaunorubicin, respectively. Could be also involved in the decarboxylation of 10-carboxy-13-deoxycarminomycin and 10-carboxy-13-deoxydaunorubicin to yield 13-deoxycarminomycin and 13-deoxydaunorubicin, respectively. It seems that DauK may influence the ability of DauP to carry out the decarboxylation. The protein is Rhodomycin D methylesterase DauP (dauP) of Streptomyces sp. (strain C5).